We begin with the raw amino-acid sequence, 339 residues long: Methionine import ATP-binding protein MetN 2 (339 aa).

Residues 2–241 enclose the ABC transporter domain; it reads ISFNNVSKVY…PKTTTTQNFV (240 aa). ATP is bound at residue 38-45; it reads GFSGAGKS.

This sequence belongs to the ABC transporter superfamily. Methionine importer (TC 3.A.1.24) family. In terms of assembly, the complex is composed of two ATP-binding proteins (MetN), two transmembrane proteins (MetI) and a solute-binding protein (MetQ).

It localises to the cell membrane. It catalyses the reaction L-methionine(out) + ATP + H2O = L-methionine(in) + ADP + phosphate + H(+). The enzyme catalyses D-methionine(out) + ATP + H2O = D-methionine(in) + ADP + phosphate + H(+). Its function is as follows. Part of the ABC transporter complex MetNIQ involved in methionine import. Responsible for energy coupling to the transport system. The sequence is that of Methionine import ATP-binding protein MetN 2 from Bacillus anthracis.